The primary structure comprises 678 residues: Methionine--tRNA ligase (678 aa).

The short motif at 18–28 (PYANGPIHLGH) is the 'HIGH' region element. Positions 149, 152, 162, and 165 each coordinate Zn(2+). A 'KMSKS' region motif is present at residues 334–338 (KMSKS). Position 337 (lysine 337) interacts with ATP. One can recognise a tRNA-binding domain in the interval 577–678 (DFAKVDLRVA…SGATPGMRVM (102 aa)).

Belongs to the class-I aminoacyl-tRNA synthetase family. MetG type 1 subfamily. Homodimer. The cofactor is Zn(2+).

It is found in the cytoplasm. It carries out the reaction tRNA(Met) + L-methionine + ATP = L-methionyl-tRNA(Met) + AMP + diphosphate. Functionally, is required not only for elongation of protein synthesis but also for the initiation of all mRNA translation through initiator tRNA(fMet) aminoacylation. This Marinobacter nauticus (strain ATCC 700491 / DSM 11845 / VT8) (Marinobacter aquaeolei) protein is Methionine--tRNA ligase.